A 182-amino-acid polypeptide reads, in one-letter code: Ribosome-recycling factor (182 aa).

This sequence belongs to the RRF family.

The protein resides in the cytoplasm. Responsible for the release of ribosomes from messenger RNA at the termination of protein biosynthesis. May increase the efficiency of translation by recycling ribosomes from one round of translation to another. In Gloeobacter violaceus (strain ATCC 29082 / PCC 7421), this protein is Ribosome-recycling factor.